We begin with the raw amino-acid sequence, 249 residues long: ATP synthase subunit a, chloroplastic (249 aa).

5 consecutive transmembrane segments (helical) span residues 38–58, 97–117, 136–156, 201–221, and 222–242; these read GQVLITSWVVMAIIIITSVIA, VPFVGTLFLFIFISNWSGALI, INTTVALALLTSVAYFYAGLS, LVVAVLISLVPLVIPVPMMLL, and GLFTSGIQALIFATLAAAYIG.

This sequence belongs to the ATPase A chain family. F-type ATPases have 2 components, CF(1) - the catalytic core - and CF(0) - the membrane proton channel. CF(1) has five subunits: alpha(3), beta(3), gamma(1), delta(1), epsilon(1). CF(0) has four main subunits: a, b, b' and c.

It is found in the plastid. Its subcellular location is the chloroplast thylakoid membrane. Key component of the proton channel; it plays a direct role in the translocation of protons across the membrane. The protein is ATP synthase subunit a, chloroplastic of Chlorokybus atmophyticus (Soil alga).